The chain runs to 170 residues: Transcriptional repressor NrdR (170 aa).

A zinc finger lies at 3 to 34 (CPFCRHPDSRVVDSRTTDDGTSIRRRRQCPDC). The ATP-cone domain maps to 46–136 (LMVVKRSGVT…VYRAFDSLED (91 aa)). The interval 148–170 (RPSAEDRGSGETLEVPAPAIAAD) is disordered.

The protein belongs to the NrdR family. It depends on Zn(2+) as a cofactor.

Its function is as follows. Negatively regulates transcription of bacterial ribonucleotide reductase nrd genes and operons by binding to NrdR-boxes. The sequence is that of Transcriptional repressor NrdR from Streptomyces griseus subsp. griseus (strain JCM 4626 / CBS 651.72 / NBRC 13350 / KCC S-0626 / ISP 5235).